The chain runs to 140 residues: Large ribosomal subunit protein bL17 (140 aa).

The protein belongs to the bacterial ribosomal protein bL17 family. Part of the 50S ribosomal subunit. Contacts protein L32.

The protein is Large ribosomal subunit protein bL17 of Ruegeria pomeroyi (strain ATCC 700808 / DSM 15171 / DSS-3) (Silicibacter pomeroyi).